A 261-amino-acid polypeptide reads, in one-letter code: Glucanase inhibitor protein 3 (261 aa).

The first 21 residues, M1–A21, serve as a signal peptide directing secretion. The 232-residue stretch at I29–K260 folds into the Peptidase S1 domain. C56 and C72 form a disulfide bridge. N-linked (GlcNAc...) asparagine glycosylation is present at N108. Intrachain disulfides connect C183–C195 and C205–C236.

The protein belongs to the peptidase S1 family.

It is found in the secreted. Secreted effector that suppresses host plant glucan elicitor-mediated defense responses. Targets host endoglucanases and inhibits the endoglucanase-mediated release of elicitor-active glucan oligosaccharides from P.sojae cell walls. This chain is Glucanase inhibitor protein 3 (GIP3), found in Phytophthora sojae (strain P6497) (Soybean stem and root rot agent).